The primary structure comprises 242 residues: Glucosamine-6-phosphate deaminase (242 aa).

Residue aspartate 67 is the Proton acceptor; for enolization step of the active site. The active-site For ring-opening step is asparagine 137. The active-site Proton acceptor; for ring-opening step is the histidine 139. The active-site For ring-opening step is glutamate 144.

This sequence belongs to the glucosamine/galactosamine-6-phosphate isomerase family. NagB subfamily.

The enzyme catalyses alpha-D-glucosamine 6-phosphate + H2O = beta-D-fructose 6-phosphate + NH4(+). The protein operates within amino-sugar metabolism; N-acetylneuraminate degradation; D-fructose 6-phosphate from N-acetylneuraminate: step 5/5. Functionally, catalyzes the reversible isomerization-deamination of glucosamine 6-phosphate (GlcN6P) to form fructose 6-phosphate (Fru6P) and ammonium ion. The polypeptide is Glucosamine-6-phosphate deaminase (Staphylococcus saprophyticus subsp. saprophyticus (strain ATCC 15305 / DSM 20229 / NCIMB 8711 / NCTC 7292 / S-41)).